Consider the following 541-residue polypeptide: RING finger protein 37 (541 aa).

The 81-residue stretch at 258-338 (DVPEEFLDPI…DHFLLQHSIP (81 aa)) folds into the U-box domain. Arginine 451 bears the Asymmetric dimethylarginine mark. The RING-type zinc finger occupies 483-528 (CASCKRVFSPYFKKEPVYQLPCGHLLCRPCLGEKQRSLPMTCTACQ).

In terms of assembly, interacts with UBE2L3. Interacts with VCP. As to expression, expressed in liver, heart, brain, kidney and testis.

It localises to the nucleus. The enzyme catalyses S-ubiquitinyl-[E2 ubiquitin-conjugating enzyme]-L-cysteine + [acceptor protein]-L-lysine = [E2 ubiquitin-conjugating enzyme]-L-cysteine + N(6)-ubiquitinyl-[acceptor protein]-L-lysine.. It participates in protein modification; protein ubiquitination. Its function is as follows. May have a ubiquitin-protein ligase activity acting as an E3 ubiquitin-protein ligase or as a ubiquitin-ubiquitin ligase promoting elongation of ubiquitin chains on substrates. The sequence is that of RING finger protein 37 from Homo sapiens (Human).